We begin with the raw amino-acid sequence, 103 residues long: Large ribosomal subunit protein bL21 (103 aa).

Belongs to the bacterial ribosomal protein bL21 family. In terms of assembly, part of the 50S ribosomal subunit. Contacts protein L20.

In terms of biological role, this protein binds to 23S rRNA in the presence of protein L20. The sequence is that of Large ribosomal subunit protein bL21 from Alkaliphilus oremlandii (strain OhILAs) (Clostridium oremlandii (strain OhILAs)).